The primary structure comprises 392 residues: Protein FAM53C (392 aa).

Methionine 1 carries the N-acetylmethionine modification. Residues 78–119 are disordered; that stretch reads LRPPSRGNSPKEQPFSQVLRPEPPDPEKLPVPPAPPSKRHCR. Polar residues predominate over residues 83 to 93; that stretch reads RGNSPKEQPFS. 6 positions are modified to phosphoserine: serine 122, serine 162, serine 232, serine 234, serine 255, and serine 273. 2 disordered regions span residues 141–167 and 204–294; these read LWTP…PKRV and RPCA…EDPR. Positions 241–256 are enriched in low complexity; sequence ASRFLPSARSSPASSP. Positions 278–294 are enriched in basic and acidic residues; the sequence is LDARKTGVKRRHEEDPR. Phosphoserine is present on serine 299. Residues 341-364 are disordered; it reads ASCSPTGGSSQVLSESEEEEEGAV.

It belongs to the FAM53 family.

The protein is Protein FAM53C of Homo sapiens (Human).